Consider the following 283-residue polypeptide: 4-diphosphocytidyl-2-C-methyl-D-erythritol kinase (283 aa).

Residue lysine 10 is part of the active site. 99–109 is an ATP binding site; the sequence is PMGGGLGGGSS. Aspartate 141 is a catalytic residue.

This sequence belongs to the GHMP kinase family. IspE subfamily. Homodimer.

The enzyme catalyses 4-CDP-2-C-methyl-D-erythritol + ATP = 4-CDP-2-C-methyl-D-erythritol 2-phosphate + ADP + H(+). It participates in isoprenoid biosynthesis; isopentenyl diphosphate biosynthesis via DXP pathway; isopentenyl diphosphate from 1-deoxy-D-xylulose 5-phosphate: step 3/6. Catalyzes the phosphorylation of the position 2 hydroxy group of 4-diphosphocytidyl-2C-methyl-D-erythritol. The chain is 4-diphosphocytidyl-2-C-methyl-D-erythritol kinase from Salmonella gallinarum (strain 287/91 / NCTC 13346).